The sequence spans 436 residues: Trigger factor (436 aa).

The PPIase FKBP-type domain occupies 163–248 (GDQVIIDFVG…VHSVQTKVLP (86 aa)).

Belongs to the FKBP-type PPIase family. Tig subfamily.

It localises to the cytoplasm. The catalysed reaction is [protein]-peptidylproline (omega=180) = [protein]-peptidylproline (omega=0). Its function is as follows. Involved in protein export. Acts as a chaperone by maintaining the newly synthesized protein in an open conformation. Functions as a peptidyl-prolyl cis-trans isomerase. The protein is Trigger factor of Hydrogenovibrio crunogenus (strain DSM 25203 / XCL-2) (Thiomicrospira crunogena).